We begin with the raw amino-acid sequence, 166 residues long: Myeloid-derived growth factor (166 aa).

A signal peptide spans Met1–Ala24.

Belongs to the MYDGF family. As to expression, expressed in prostate, spleen and lung, and weakly expressed in the left ventricle (LF) and liver. Expressed predominantly in inflammatory cells, such as monocytes and macrophages, and weakly expressed in neutrophils, T-cells, B-cells, endothelial cells and cardiac myocytes, after myocardial infarction (MI) (at protein level).

The protein resides in the secreted. It is found in the endoplasmic reticulum-Golgi intermediate compartment. Its subcellular location is the endoplasmic reticulum. It localises to the golgi apparatus. Functionally, bone marrow-derived monocyte and paracrine-acting protein that promotes cardiac myocyte survival and adaptive angiogenesis for cardiac protection and/or repair after myocardial infarction (MI). Stimulates endothelial cell proliferation through a MAPK1/3-, STAT3- and CCND1-mediated signaling pathway. Inhibits cardiac myocyte apoptosis in a PI3K/AKT-dependent signaling pathway. The polypeptide is Myeloid-derived growth factor (Mus musculus (Mouse)).